A 399-amino-acid chain; its full sequence is Elongation factor Tu (399 aa).

The tr-type G domain occupies 10–204 (KPHVNIGTIG…AVDTSIPEPE (195 aa)). The G1 stretch occupies residues 19–26 (GHVDHGKT). 19 to 26 (GHVDHGKT) is a binding site for GTP. Thr-26 is a binding site for Mg(2+). Residues 60-64 (GITIN) are G2. Residues 81–84 (DCPG) are G3. Residues 81 to 85 (DCPGH) and 136 to 139 (NKCD) each bind GTP. Residues 136-139 (NKCD) are G4. The G5 stretch occupies residues 174–176 (SGL).

This sequence belongs to the TRAFAC class translation factor GTPase superfamily. Classic translation factor GTPase family. EF-Tu/EF-1A subfamily. Monomer.

The protein resides in the cytoplasm. It catalyses the reaction GTP + H2O = GDP + phosphate + H(+). GTP hydrolase that promotes the GTP-dependent binding of aminoacyl-tRNA to the A-site of ribosomes during protein biosynthesis. This chain is Elongation factor Tu, found in Prochlorococcus marinus (strain MIT 9303).